Reading from the N-terminus, the 463-residue chain is Carnosine N-methyltransferase (463 aa).

Disordered regions lie at residues 1-64 (MTKN…SQLK) and 79-104 (KHNHDHSHDHNHDYDDNNEDDEEKEE). The segment covering 9-58 (KSNNSNISNNNNNNNNNNNNNNNNNNNNNNNNNNNNNNNNNNNNNNNNKN) has biased composition (low complexity). Positions 79 to 93 (KHNHDHSHDHNHDYD) are enriched in basic and acidic residues. Over residues 94-103 (DNNEDDEEKE) the composition is skewed to acidic residues. 7 residues coordinate S-adenosyl-L-methionine: glutamine 215, arginine 218, glycine 260, glutamate 281, aspartate 351, phenylalanine 352, and cysteine 367. Aspartate 371 provides a ligand contact to carnosine. S-adenosyl-L-methionine is bound at residue tyrosine 379. Carnosine-binding residues include histidine 402 and tyrosine 450.

This sequence belongs to the carnosine N-methyltransferase family.

It catalyses the reaction carnosine + S-adenosyl-L-methionine = anserine + S-adenosyl-L-homocysteine + H(+). N-methyltransferase that mediates the formation of anserine (beta-alanyl-N(Pi)-methyl-L-histidine) from carnosine. This Dictyostelium discoideum (Social amoeba) protein is Carnosine N-methyltransferase.